The chain runs to 428 residues: Histidinol dehydrogenase homolog (428 aa).

Positions 250 and 253 each coordinate Zn(2+). Catalysis depends on proton acceptor residues Glu320 and His321. Zn(2+) is bound by residues Asp354 and His413.

It belongs to the histidinol dehydrogenase family. The cofactor is Zn(2+).

This chain is Histidinol dehydrogenase homolog, found in Pelagibacter ubique (strain HTCC1062).